We begin with the raw amino-acid sequence, 149 residues long: Nascent polypeptide-associated complex subunit beta-2 (149 aa).

The NAC-A/B domain occupies 38 to 103 (DKDNTKLQAE…PKENTLNGLY (66 aa)).

Belongs to the NAC-beta family. Part of the nascent polypeptide-associated complex (NAC), consisting of EGD2 and either EGD1 or BTT1. NAC associates with ribosomes via EGD1 or BTT1.

The protein resides in the cytoplasm. Its subcellular location is the nucleus. In terms of biological role, acts as a component of the nascent polypeptide-associated complex (NAC), which promotes mitochondrial protein import by enhancing productive ribosome interactions with the outer mitochondrial membrane. Also blocks the inappropriate interaction of ribosomes translating non-secretory nascent polypeptides with translocation sites in the membrane of the endoplasmic reticulum. BTT1 may act as a transcription factor that exert a negative effect on the expression of several genes that are transcribed by RNA polymerase II. In Saccharomyces cerevisiae (strain ATCC 204508 / S288c) (Baker's yeast), this protein is Nascent polypeptide-associated complex subunit beta-2 (BTT1).